The sequence spans 366 residues: Anhydro-N-acetylmuramic acid kinase (366 aa).

15–22 (GTSLDGVD) serves as a coordination point for ATP.

The protein belongs to the anhydro-N-acetylmuramic acid kinase family.

The enzyme catalyses 1,6-anhydro-N-acetyl-beta-muramate + ATP + H2O = N-acetyl-D-muramate 6-phosphate + ADP + H(+). The protein operates within amino-sugar metabolism; 1,6-anhydro-N-acetylmuramate degradation. It participates in cell wall biogenesis; peptidoglycan recycling. Its function is as follows. Catalyzes the specific phosphorylation of 1,6-anhydro-N-acetylmuramic acid (anhMurNAc) with the simultaneous cleavage of the 1,6-anhydro ring, generating MurNAc-6-P. Is required for the utilization of anhMurNAc either imported from the medium or derived from its own cell wall murein, and thus plays a role in cell wall recycling. The polypeptide is Anhydro-N-acetylmuramic acid kinase (Hydrogenovibrio crunogenus (strain DSM 25203 / XCL-2) (Thiomicrospira crunogena)).